The following is a 2529-amino-acid chain: Zinc finger FYVE domain-containing protein 26 (2529 aa).

Disordered stretches follow at residues 584-650, 689-709, and 733-810; these read HLPE…PGPH, SSHR…SAAR, and VTSN…RFQT. Phosphoserine is present on residues Ser605 and Ser609. Basic and acidic residues predominate over residues 689 to 701; that stretch reads SSHRTPEETKLPE. The span at 755 to 765 shows a compositional bias: basic residues; the sequence is SSLRRGRRTRR. Over residues 778–796 the composition is skewed to low complexity; the sequence is SLEGTSSELSTSTSEGSLS. At Ser791 the chain carries Phosphoserine. The segment covering 797–810 has biased composition (polar residues); sequence AVSGQVESDSRFQT. Residues 859 to 884 are a coiled coil; it reads MFVERYQEVIQELARVEHKIENQNSD. Residues 1258-1286 are disordered; sequence GLPLSTLGSPRPSENPSAERKSHSSPKDS. Residues 1263 to 1273 show a composition bias toward polar residues; it reads TLGSPRPSENP. The segment covering 1274–1283 has biased composition (basic and acidic residues); it reads SAERKSHSSP. Positions 1488–1515 form a coiled coil; sequence VSDMAVQEELKSELQRKLMELRVYQKIL. Phosphoserine occurs at positions 1732, 1754, 1770, and 1772. A disordered region spans residues 1762–1799; sequence APGSALVRSPSPKERAFPQTQPPVEFVPPETPPARDQW. The FYVE-type zinc finger occupies 1802–1862; the sequence is DETESVCMVC…VCDQCYSYYN (61 aa). Cys1808, Cys1811, Cys1825, Cys1828, Cys1833, Cys1836, Cys1854, and Cys1857 together coordinate Zn(2+). Residues 1865-1884 form a disordered region; that stretch reads TPEESPCQSEVPDSAKNESP.

This sequence belongs to the ZFYVE26 family. In terms of assembly, interacts with AP5Z1, AP5B1, AP5S1 and SPG11. Interacts with TTC19 and KIF13A.

It localises to the cytoplasm. Its subcellular location is the cytoskeleton. It is found in the microtubule organizing center. The protein localises to the centrosome. The protein resides in the midbody. Its function is as follows. Phosphatidylinositol 3-phosphate-binding protein required for the abscission step in cytokinesis: recruited to the midbody during cytokinesis and acts as a regulator of abscission. May also be required for efficient homologous recombination DNA double-strand break repair. The protein is Zinc finger FYVE domain-containing protein 26 (Zfyve26) of Mus musculus (Mouse).